The following is a 136-amino-acid chain: Large ribosomal subunit protein uL16c (136 aa).

Residues 1–17 are compositionally biased toward basic residues; sequence MLSPKRVKFRKQHRGRM. The interval 1 to 25 is disordered; sequence MLSPKRVKFRKQHRGRMKGISTRGN.

The protein belongs to the universal ribosomal protein uL16 family. Part of the 50S ribosomal subunit.

The protein resides in the plastid. Its subcellular location is the chloroplast. The polypeptide is Large ribosomal subunit protein uL16c (Anthoceros angustus (Hornwort)).